The following is a 179-amino-acid chain: Fas apoptotic inhibitory molecule 1 (179 aa).

T2 carries the N-acetylthreonine modification.

The protein belongs to the FAIM1 family. As to expression, widely expressed, with the highest levels in brain, thymus, kidney, and spleen.

Its subcellular location is the cytoplasm. Functionally, plays a role as an inducible effector molecule that mediates Fas resistance produced by surface Ig engagement in B cells. This Mus musculus (Mouse) protein is Fas apoptotic inhibitory molecule 1 (Faim).